The sequence spans 1740 residues: DNA polymerase (1740 aa).

The tract at residues 472 to 491 (IEMPHNQEDSDSEKEDEDTD) is disordered. The span at 480–491 (DSDSEKEDEDTD) shows a compositional bias: acidic residues. Positions 1189-1334 (VWGFFMGDGS…LFYLLKSLGY (146 aa)) constitute a DOD-type homing endonuclease domain. The tract at residues 1673 to 1701 (PKESGSKTAKKPYQSQKLQKTKSSNKSQI) is disordered. Over residues 1685-1700 (YQSQKLQKTKSSNKSQ) the composition is skewed to polar residues.

This sequence belongs to the DNA polymerase type-B family. Post-translationally, this protein undergoes a protein self splicing that involves a post-translational excision of the intervening region (intein) followed by peptide ligation.

It carries out the reaction DNA(n) + a 2'-deoxyribonucleoside 5'-triphosphate = DNA(n+1) + diphosphate. This is DNA polymerase (POLB) from Acanthamoeba polyphaga (Amoeba).